The following is a 362-amino-acid chain: Glutaminyl-peptide cyclotransferase (362 aa).

The N-terminal stretch at 1–35 (MAGSEDKRVVGTLHLLLLQATVLSLTAGNLSLVSA) is a signal peptide. N-linked (GlcNAc...) asparagine glycosylation is found at asparagine 29 and asparagine 50. Cysteines 140 and 165 form a disulfide. Aspartate 160 lines the Zn(2+) pocket. Glutamate 202 (proton acceptor) is an active-site residue. Glutamate 203 is a binding site for Zn(2+). Aspartate 249 serves as the catalytic Proton acceptor. Histidine 331 provides a ligand contact to Zn(2+).

Belongs to the glutaminyl-peptide cyclotransferase family.

It is found in the secreted. It catalyses the reaction N-terminal L-glutaminyl-[peptide] = N-terminal 5-oxo-L-prolyl-[peptide] + NH4(+). In terms of biological role, responsible for the biosynthesis of pyroglutamyl peptides. Has a bias against acidic and tryptophan residues adjacent to the N-terminal glutaminyl residue and a lack of importance of chain length after the second residue. In Mus musculus (Mouse), this protein is Glutaminyl-peptide cyclotransferase (Qpct).